A 169-amino-acid polypeptide reads, in one-letter code: uncharacterized protein (169 aa).

A Phosphoserine modification is found at serine 165.

This is an uncharacterized protein from Drosophila melanogaster (Fruit fly).